Consider the following 199-residue polypeptide: MSGFTRPLARLIDQFERLPGIGPRTAQRLALHLLRQPEEQIRSFADALLAARTEVGHCQTCHHLSAEPTCEICRNPERANGQICVVADSRDLLALERTREFSGHYHVLGGLISPMDGIGPDLLQISSLVKRVAANNTEEVILALTPSVEGDTTSLYVARLLKPFTRVSRIAYGLPVGSELEYADDVTLSRALEGRRAVE.

The C4-type zinc-finger motif lies at Cys58–Cys73. The Toprim domain maps to Gly81–Pro175.

The protein belongs to the RecR family.

In terms of biological role, may play a role in DNA repair. It seems to be involved in an RecBC-independent recombinational process of DNA repair. It may act with RecF and RecO. This is Recombination protein RecR from Synechococcus sp. (strain WH7803).